The following is a 314-amino-acid chain: tRNA pseudouridine synthase B (314 aa).

Substrate is bound at residue H43. Residue D48 is the Nucleophile of the active site. Y76, Y179, and L200 together coordinate substrate.

Belongs to the pseudouridine synthase TruB family. Type 1 subfamily.

The enzyme catalyses uridine(55) in tRNA = pseudouridine(55) in tRNA. Its function is as follows. Responsible for synthesis of pseudouridine from uracil-55 in the psi GC loop of transfer RNAs. This chain is tRNA pseudouridine synthase B, found in Shigella dysenteriae serotype 1 (strain Sd197).